We begin with the raw amino-acid sequence, 39 residues long: Photosystem II reaction center protein L (39 aa).

The chain crosses the membrane as a helical span at residues 18-38 (SLYLGVLSVLVLGILFSSYFF).

The protein belongs to the PsbL family. PSII is composed of 1 copy each of membrane proteins PsbA, PsbB, PsbC, PsbD, PsbE, PsbF, PsbH, PsbI, PsbJ, PsbK, PsbL, PsbM, PsbT, PsbX, PsbY, Psb30/Ycf12, peripheral proteins PsbO, CyanoQ (PsbQ), PsbU, PsbV and a large number of cofactors. It forms dimeric complexes.

The protein resides in the cellular thylakoid membrane. Functionally, one of the components of the core complex of photosystem II (PSII). PSII is a light-driven water:plastoquinone oxidoreductase that uses light energy to abstract electrons from H(2)O, generating O(2) and a proton gradient subsequently used for ATP formation. It consists of a core antenna complex that captures photons, and an electron transfer chain that converts photonic excitation into a charge separation. This subunit is found at the monomer-monomer interface and is required for correct PSII assembly and/or dimerization. The protein is Photosystem II reaction center protein L of Prochlorococcus marinus (strain MIT 9515).